A 417-amino-acid polypeptide reads, in one-letter code: NADP-specific glutamate dehydrogenase A1 (417 aa).

The active site involves Lys-105.

Belongs to the Glu/Leu/Phe/Val dehydrogenases family. In terms of assembly, homohexamer.

It carries out the reaction L-glutamate + NADP(+) + H2O = 2-oxoglutarate + NH4(+) + NADPH + H(+). The chain is NADP-specific glutamate dehydrogenase A1 (gdhA1) from Halobacterium salinarum (Halobacterium halobium).